The sequence spans 249 residues: MAQAVEEWYRQMPIITRSYLTAAVVTTVGCTLEIISPYHLYLNPKLVVQHYEIWRLVTNFLYFRKMDLDFLFHMFFLARYCKLLEENSFRGRTADFFYMLLFGATVLTGIVLIGGMIPYISETFARILFLSNSLTFMMVYVWSKHNPFIHMSFLGLFTFTAAYLPWVLLGFSILVGSSTWVDLLGMIAGHVYYFLEDVYPRMTGRRPLKTPSFIKALFADDNVVVARPPNAGLGAGARFGAMGADPQAQ.

The Cytoplasmic segment spans residues 1–21 (MAQAVEEWYRQMPIITRSYLT). A helical transmembrane segment spans residues 22 to 42 (AAVVTTVGCTLEIISPYHLYL). Residues 43 to 96 (NPKLVVQHYEIWRLVTNFLYFRKMDLDFLFHMFFLARYCKLLEENSFRGRTADF) are Lumenal-facing. A helical transmembrane segment spans residues 97 to 117 (FYMLLFGATVLTGIVLIGGMI). Topologically, residues 118–122 (PYISE) are cytoplasmic. Residues 123-143 (TFARILFLSNSLTFMMVYVWS) traverse the membrane as a helical segment. Residues 144–152 (KHNPFIHMS) are Lumenal-facing. The chain crosses the membrane as a helical span at residues 153–173 (FLGLFTFTAAYLPWVLLGFSI). Topologically, residues 174–249 (LVGSSTWVDL…GAMGADPQAQ (76 aa)) are cytoplasmic.

Belongs to the derlin family.

It localises to the endoplasmic reticulum membrane. May be involved in the degradation process of specific misfolded endoplasmic reticulum (ER) luminal proteins. The sequence is that of Derlin-2 (DER2) from Oryza sativa subsp. japonica (Rice).